Reading from the N-terminus, the 91-residue chain is Sec-independent protein translocase protein TatAt (91 aa).

Residues 9–29 (FPGLPGGPELLVVLLIVVLLF) traverse the membrane as a helical segment. Residues 48 to 91 (FQRGREEIEDELQDMTGDDDEDDATSESSADSVSTDSVSTESSN) form a disordered region. The span at 54–72 (EIEDELQDMTGDDDEDDAT) shows a compositional bias: acidic residues. Positions 73–91 (SESSADSVSTDSVSTESSN) are enriched in low complexity.

Belongs to the TatA/E family. As to quaternary structure, forms a complex with TatC. Cytoplasmic and membrane-bound TatA form high-molecular-weight complexes.

Its subcellular location is the cell membrane. The protein localises to the cytoplasm. Part of the twin-arginine translocation (Tat) system that transports large folded proteins containing a characteristic twin-arginine motif in their signal peptide across membranes. TatA could form the protein-conducting channel of the Tat system. The polypeptide is Sec-independent protein translocase protein TatAt (Haloferax volcanii (strain ATCC 29605 / DSM 3757 / JCM 8879 / NBRC 14742 / NCIMB 2012 / VKM B-1768 / DS2) (Halobacterium volcanii)).